The primary structure comprises 63 residues: Large ribosomal subunit protein uL30 (63 aa).

It belongs to the universal ribosomal protein uL30 family. Part of the 50S ribosomal subunit.

This Rhodospirillum rubrum (strain ATCC 11170 / ATH 1.1.1 / DSM 467 / LMG 4362 / NCIMB 8255 / S1) protein is Large ribosomal subunit protein uL30.